The chain runs to 100 residues: Large ribosomal subunit protein uL23 (100 aa).

This sequence belongs to the universal ribosomal protein uL23 family. As to quaternary structure, part of the 50S ribosomal subunit. Contacts protein L29, and trigger factor when it is bound to the ribosome.

Its function is as follows. One of the early assembly proteins it binds 23S rRNA. One of the proteins that surrounds the polypeptide exit tunnel on the outside of the ribosome. Forms the main docking site for trigger factor binding to the ribosome. The chain is Large ribosomal subunit protein uL23 from Lacticaseibacillus casei (strain BL23) (Lactobacillus casei).